We begin with the raw amino-acid sequence, 145 residues long: MSKGKVLLVLYEGGKHAEEQEKLLGCIENELGIRNFIEEQGYELVTTIDKDPEPTSTVDRELKDAEIVITTPFFPAYISRNRIAEAPNLKLCVTAGVGSDHVDLEAANERKITVTEVTGSNVVSVAEHVMATILVLIRNYNGGHQ.

2 residues coordinate substrate: Val97 and Asn121.

This sequence belongs to the D-isomer specific 2-hydroxyacid dehydrogenase family. FDH subfamily.

This is an uncharacterized protein from Saccharomyces cerevisiae (strain ATCC 204508 / S288c) (Baker's yeast).